A 132-amino-acid polypeptide reads, in one-letter code: Intraflagellar transport protein 20 homolog (132 aa).

The tract at residues 70-132 (MKAIGARNLL…EFIDQFIFQK (63 aa)) is IFT57-binding. Residues 74-114 (GARNLLKSIAKQREAQQQQLQALIAEKKMQLERYRVEYEAL) adopt a coiled-coil conformation.

Component of the IFT complex B, at least composed of IFT20, IFT22, IFT25, IFT27, IFT46, IFT52, TRAF3IP1/IFT54, IFT57, IFT74, IFT80, IFT81, and IFT88. Interacts directly with IFT57 and KIF3B/Kinesin II subunit. Interacts with IFT88. Interacts with CEP83. Interacts with SPEF2 (via C-terminus). Interacts with CBL and CBLB. Interacts with TRIP11. Interacts with TTC21A. Interacts with SPATA1. Interacts with USH1G. Interacts with CCDC146. Interacts with CEP78; regulating IFT20 stability and localization. Expressed in almost all tissues.

It is found in the golgi apparatus. Its subcellular location is the cis-Golgi network. It localises to the cytoplasm. The protein localises to the cytoskeleton. The protein resides in the microtubule organizing center. It is found in the centrosome. Its subcellular location is the centriole. It localises to the cilium basal body. The protein localises to the cell projection. The protein resides in the cilium. It is found in the cytoplasmic vesicle. Its subcellular location is the secretory vesicle. It localises to the acrosome. In terms of biological role, part of intraflagellar transport (IFT) particles involved in ciliary process assembly. May play a role in the trafficking of ciliary membrane proteins from the Golgi complex to the cilium. Regulates the platelet-derived growth factor receptor-alpha (PDGFRA) signaling pathway. Required for protein stability of E3 ubiquitin ligases CBL and CBLB that mediate ubiquitination and internalization of PDGFRA for proper feedback inhibition of PDGFRA signaling. Essential for male fertility. Plays an important role in spermatogenesis, particularly spermiogenesis, when germ cells form flagella. May play a role in the transport of flagellar proteins ODF2 and SPAG16 to build sperm flagella and in the removal of redundant sperm cytoplasm. Also involved in autophagy since it is required for trafficking of ATG16L and the expansion of the autophagic compartment. The polypeptide is Intraflagellar transport protein 20 homolog (IFT20) (Homo sapiens (Human)).